The chain runs to 455 residues: Phosphoglucosamine mutase (455 aa).

The active-site Phosphoserine intermediate is the S102. Mg(2+)-binding residues include S102, D241, D243, and D245. S102 carries the phosphoserine modification.

This sequence belongs to the phosphohexose mutase family. Requires Mg(2+) as cofactor. In terms of processing, activated by phosphorylation.

The enzyme catalyses alpha-D-glucosamine 1-phosphate = D-glucosamine 6-phosphate. In terms of biological role, catalyzes the conversion of glucosamine-6-phosphate to glucosamine-1-phosphate. The polypeptide is Phosphoglucosamine mutase (Legionella pneumophila (strain Lens)).